A 216-amino-acid chain; its full sequence is uncharacterized protein (216 aa).

Positions 56 and 77 each coordinate S-adenosyl-L-methionine.

This sequence belongs to the methyltransferase superfamily. YrrT family.

Could be a S-adenosyl-L-methionine-dependent methyltransferase. This is an uncharacterized protein from Alkaliphilus oremlandii (strain OhILAs) (Clostridium oremlandii (strain OhILAs)).